The primary structure comprises 532 residues: Cytochrome P450 714B2 (532 aa).

The Lumenal segment spans residues 1-2 (ME). The chain crosses the membrane as a helical; Signal-anchor for type III membrane protein span at residues 3–23 (VGMVVVVAAKVLVSLWCVGAC). The Cytoplasmic segment spans residues 24–532 (CLAAYLYRVV…LTRVQGAYRH (509 aa)). Cys-474 contacts heme.

Belongs to the cytochrome P450 family. Heme serves as cofactor. Highly expressed in shoot, spikelet and uppermost internode. Detected in roots, leaves and anthers.

The protein localises to the membrane. In terms of biological role, catalyzes the 13-hydroxylation of gibberellins (GAs). Determines the ratio of GA4 and GA1. Converts GA12 into GA53. This Oryza sativa subsp. japonica (Rice) protein is Cytochrome P450 714B2 (CYP714B2).